Reading from the N-terminus, the 114-residue chain is MHILDSVDKASLRSDIPDFRAGDTVKVHVNIVEGSRSRIQVFQGIVIGRQGEGVGETFCVRKVSFQVGVERTFPVHSPVIDHIEVVTRGDVRRAKLYFLRDLRGKKAKIKEKRS.

The protein belongs to the bacterial ribosomal protein bL19 family.

Its function is as follows. This protein is located at the 30S-50S ribosomal subunit interface and may play a role in the structure and function of the aminoacyl-tRNA binding site. The polypeptide is Large ribosomal subunit protein bL19 (Clavibacter michiganensis subsp. michiganensis (strain NCPPB 382)).